The primary structure comprises 424 residues: DNA repair protein Rad60 (424 aa).

At tyrosine 26 the chain carries Phosphotyrosine. Residues serine 32 and serine 34 each carry the phosphoserine modification. Residues 45–177 are disordered; the sequence is LPKKSTKTGK…LTTTTSNSAS (133 aa). Over residues 48 to 57 the composition is skewed to basic residues; it reads KSTKTGKRKN. Residues 77–93 are compositionally biased toward basic and acidic residues; sequence QAEHKAVEPEEDMRTER. Serine 96 carries the post-translational modification Phosphoserine. Over residues 104-123 the composition is skewed to basic and acidic residues; sequence EMEKKNGQQSDVEKHAKEND. Residues 156-166 show a composition bias toward basic residues; the sequence is KPKKRGQKKRT. The span at 167-177 shows a compositional bias: low complexity; that stretch reads SLTTTTSNSAS.

As to quaternary structure, forms a complex with dgrn; likely required for localization to the nuclear periphery. Interacts with the SMC5-SMC6 complex members SMC5 and SMC6/jnj following ionizing radiation (IR) to induce DNA damage. Interaction between the SMC5-SMC6 complex and the dgrn-Rad60 complex, may stabilize the association of heterochromatic DSBs with the nuclear periphery.

It is found in the nucleus. It localises to the nucleoplasm. Functionally, required for repair of DNA double strand breaks which occur during replication or are induced by ionizing radiation (IR). Functions with dgrn and downstream of the SMC5-SMC6 complex to regulate strand break repair. Likely functions by stabilizing the association of heterochromatic double strand breaks (DSBs) with the nuclear periphery as part of the homologous recombination (HR) repair process. This is DNA repair protein Rad60 from Drosophila melanogaster (Fruit fly).